A 508-amino-acid chain; its full sequence is Light-independent protochlorophyllide reductase subunit B (508 aa).

Residue Asp-36 participates in [4Fe-4S] cluster binding. Catalysis depends on Asp-294, which acts as the Proton donor. 429–430 (GM) contacts substrate.

It belongs to the ChlB/BchB/BchZ family. As to quaternary structure, protochlorophyllide reductase is composed of three subunits; ChlL, ChlN and ChlB. Forms a heterotetramer of two ChlB and two ChlN subunits. [4Fe-4S] cluster serves as cofactor.

The enzyme catalyses chlorophyllide a + oxidized 2[4Fe-4S]-[ferredoxin] + 2 ADP + 2 phosphate = protochlorophyllide a + reduced 2[4Fe-4S]-[ferredoxin] + 2 ATP + 2 H2O. It participates in porphyrin-containing compound metabolism; chlorophyll biosynthesis (light-independent). In terms of biological role, component of the dark-operative protochlorophyllide reductase (DPOR) that uses Mg-ATP and reduced ferredoxin to reduce ring D of protochlorophyllide (Pchlide) to form chlorophyllide a (Chlide). This reaction is light-independent. The NB-protein (ChlN-ChlB) is the catalytic component of the complex. In Nostoc sp. (strain PCC 7120 / SAG 25.82 / UTEX 2576), this protein is Light-independent protochlorophyllide reductase subunit B.